Consider the following 323-residue polypeptide: Delta-aminolevulinic acid dehydratase (323 aa).

3 residues coordinate Zn(2+): cysteine 118, cysteine 120, and cysteine 128. Catalysis depends on lysine 193, which acts as the Schiff-base intermediate with substrate. 5-aminolevulinate-binding residues include arginine 203 and arginine 215. Glutamate 231 serves as a coordination point for Mg(2+). The active-site Schiff-base intermediate with substrate is the lysine 246. 5-aminolevulinate-binding residues include serine 272 and tyrosine 311.

This sequence belongs to the ALAD family. Homooctamer. Requires Zn(2+) as cofactor.

The catalysed reaction is 2 5-aminolevulinate = porphobilinogen + 2 H2O + H(+). The protein operates within porphyrin-containing compound metabolism; protoporphyrin-IX biosynthesis; coproporphyrinogen-III from 5-aminolevulinate: step 1/4. Functionally, catalyzes an early step in the biosynthesis of tetrapyrroles. Binds two molecules of 5-aminolevulinate per subunit, each at a distinct site, and catalyzes their condensation to form porphobilinogen. The chain is Delta-aminolevulinic acid dehydratase (hemB) from Helicobacter pylori (strain J99 / ATCC 700824) (Campylobacter pylori J99).